Here is a 420-residue protein sequence, read N- to C-terminus: Serine--tRNA ligase (420 aa).

227-229 (TSE) contributes to the L-serine binding site. Residues 258-260 (RRE) and V274 each bind ATP. E281 is a binding site for L-serine. 345 to 348 (ELTS) serves as a coordination point for ATP. Residue T380 coordinates L-serine.

It belongs to the class-II aminoacyl-tRNA synthetase family. Type-1 seryl-tRNA synthetase subfamily. In terms of assembly, homodimer. The tRNA molecule binds across the dimer.

It is found in the cytoplasm. It catalyses the reaction tRNA(Ser) + L-serine + ATP = L-seryl-tRNA(Ser) + AMP + diphosphate + H(+). The catalysed reaction is tRNA(Sec) + L-serine + ATP = L-seryl-tRNA(Sec) + AMP + diphosphate + H(+). Its pathway is aminoacyl-tRNA biosynthesis; selenocysteinyl-tRNA(Sec) biosynthesis; L-seryl-tRNA(Sec) from L-serine and tRNA(Sec): step 1/1. Catalyzes the attachment of serine to tRNA(Ser). Is also able to aminoacylate tRNA(Sec) with serine, to form the misacylated tRNA L-seryl-tRNA(Sec), which will be further converted into selenocysteinyl-tRNA(Sec). The protein is Serine--tRNA ligase of Nocardia farcinica (strain IFM 10152).